Reading from the N-terminus, the 542-residue chain is Chondroitin sulfate N-acetylgalactosaminyltransferase 2 (542 aa).

The Cytoplasmic segment spans residues 1-13 (MSRRGSILHSRTQ). A helical; Signal-anchor for type II membrane protein membrane pass occupies residues 14-34 (WLLLGLALLFSLVLFMYLLEC). Residues 35–542 (APQTDGNASL…AYRTNSETAG (508 aa)) lie on the Lumenal side of the membrane. Asparagine 41 carries an N-linked (GlcNAc...) asparagine glycan. Positions 59–105 (ALLQEQEEHYQTRATSLKRQIAQLKQELQDMSEKMRALQERKKLGAN) form a coiled coil. N-linked (GlcNAc...) asparagine glycosylation occurs at asparagine 333. Residues aspartate 369 and histidine 486 each coordinate a divalent metal cation.

It belongs to the chondroitin N-acetylgalactosaminyltransferase family.

The protein localises to the golgi apparatus. Its subcellular location is the golgi stack membrane. The catalysed reaction is 3-O-(beta-D-GlcA-(1-&gt;3)-beta-D-Gal-(1-&gt;3)-beta-D-Gal-(1-&gt;4)-beta-D-Xyl)-L-seryl-[protein] + UDP-N-acetyl-alpha-D-galactosamine = 3-O-(beta-D-GalNAc-(1-&gt;4)-beta-D-GlcA-(1-&gt;3)-beta-D-Gal-(1-&gt;3)-beta-D-Gal-(1-&gt;4)-beta-D-Xyl)-L-seryl-[protein] + UDP + H(+). Its function is as follows. Transfers 1,4-N-acetylgalactosamine (GalNAc) from UDP-GalNAc to the non-reducing end of glucuronic acid (GlcUA). Required for addition of the first GalNAc to the core tetrasaccharide linker and for elongation of chondroitin chains. The polypeptide is Chondroitin sulfate N-acetylgalactosaminyltransferase 2 (Csgalnact2) (Mus musculus (Mouse)).